We begin with the raw amino-acid sequence, 156 residues long: Bursicon (156 aa).

Positions 1–26 (MYALDFLFIAFVYFAACHIQEKPVRA) are cleaved as a signal peptide. 5 disulfides stabilise this stretch: Cys-37–Cys-86, Cys-51–Cys-100, Cys-61–Cys-121, Cys-65–Cys-123, and Cys-83–Cys-126. The CTCK domain maps to 37–127 (CQMTPVIHIL…PLECMCRPCG (91 aa)).

In terms of assembly, heterodimer of burs and pburs.

It localises to the secreted. Its function is as follows. Final heterodimeric neurohormone released at the end of the molting cycle, involved in the sclerotization (tanning) of the insect cuticle, melanization and wing spreading. The polypeptide is Bursicon (Manduca sexta (Tobacco hawkmoth)).